The sequence spans 69 residues: Small, acid-soluble spore protein A (69 aa).

The protein belongs to the alpha/beta-type SASP family.

Functionally, SASP are bound to spore DNA. They are double-stranded DNA-binding proteins that cause DNA to change to an a-like conformation. They protect the DNA backbone from chemical and enzymatic cleavage and are thus involved in dormant spore's high resistance to UV light. The protein is Small, acid-soluble spore protein A (sspA) of Bacillus subtilis (strain 168).